Reading from the N-terminus, the 227-residue chain is Biosynthetic peptidoglycan transglycosylase (227 aa).

The helical transmembrane segment at 7 to 27 (VALLTLLLLVAAPYVLTLVYG) threads the bilayer.

The protein belongs to the glycosyltransferase 51 family.

The protein localises to the cell inner membrane. It carries out the reaction [GlcNAc-(1-&gt;4)-Mur2Ac(oyl-L-Ala-gamma-D-Glu-L-Lys-D-Ala-D-Ala)](n)-di-trans,octa-cis-undecaprenyl diphosphate + beta-D-GlcNAc-(1-&gt;4)-Mur2Ac(oyl-L-Ala-gamma-D-Glu-L-Lys-D-Ala-D-Ala)-di-trans,octa-cis-undecaprenyl diphosphate = [GlcNAc-(1-&gt;4)-Mur2Ac(oyl-L-Ala-gamma-D-Glu-L-Lys-D-Ala-D-Ala)](n+1)-di-trans,octa-cis-undecaprenyl diphosphate + di-trans,octa-cis-undecaprenyl diphosphate + H(+). It functions in the pathway cell wall biogenesis; peptidoglycan biosynthesis. Peptidoglycan polymerase that catalyzes glycan chain elongation from lipid-linked precursors. This Rhodopseudomonas palustris (strain HaA2) protein is Biosynthetic peptidoglycan transglycosylase.